The following is a 294-amino-acid chain: Flagellin B1 (294 aa).

A propeptide spanning residues 1-8 (MKTRTRKG) is cleaved from the precursor.

This sequence belongs to the archaeal flagellin family.

The protein localises to the archaeal flagellum. Its function is as follows. Flagellin is the subunit protein which polymerizes to form the filaments of archaeal flagella. The chain is Flagellin B1 (flaB1) from Thermococcus kodakarensis (strain ATCC BAA-918 / JCM 12380 / KOD1) (Pyrococcus kodakaraensis (strain KOD1)).